The sequence spans 272 residues: Small ribosomal subunit protein uS3 (272 aa).

The region spanning Ile-43 to Lys-111 is the KH type-2 domain. A disordered region spans residues Ala-218 to Ala-272. Residues Arg-229–Glu-238 are compositionally biased toward basic and acidic residues. Residues Glu-253–Ala-272 are compositionally biased toward low complexity.

The protein belongs to the universal ribosomal protein uS3 family. As to quaternary structure, part of the 30S ribosomal subunit. Forms a tight complex with proteins S10 and S14.

Its function is as follows. Binds the lower part of the 30S subunit head. Binds mRNA in the 70S ribosome, positioning it for translation. This chain is Small ribosomal subunit protein uS3, found in Micrococcus luteus (strain ATCC 4698 / DSM 20030 / JCM 1464 / CCM 169 / CCUG 5858 / IAM 1056 / NBRC 3333 / NCIMB 9278 / NCTC 2665 / VKM Ac-2230) (Micrococcus lysodeikticus).